Reading from the N-terminus, the 152-residue chain is UPF0756 membrane protein EF_1246 (152 aa).

4 helical membrane-spanning segments follow: residues 4 to 24, 52 to 72, 85 to 105, and 115 to 135; these read WLFL…SLLI, LGVT…QIGL, WLGI…VGLI, and LVFG…GPII.

Belongs to the UPF0756 family.

Its subcellular location is the cell membrane. The polypeptide is UPF0756 membrane protein EF_1246 (Enterococcus faecalis (strain ATCC 700802 / V583)).